Here is a 228-residue protein sequence, read N- to C-terminus: Eukaryotic translation initiation factor 4E-1 (228 aa).

A compositionally biased stretch (basic and acidic residues) spans 1–19 (MATAEMEKTTTFDEAEKVK). The disordered stretch occupies residues 1 to 33 (MATAEMEKTTTFDEAEKVKLNANEADDEVEEGE). Over residues 24–33 (EADDEVEEGE) the composition is skewed to acidic residues. EIF4G-binding regions lie at residues 53 to 56 (HPLE) and 63 to 99 (FDNP…NNIH). Residues 71–76 (KQAAWG), K103, and 121–122 (WE) each bind mRNA. C126 and C164 are joined by a disulfide. The interval 147-156 (YTLLAMIGHQ) is EIF4G-binding. Residues 171–176 (RGKGEK) and 216–220 (KRLDR) each bind mRNA.

This sequence belongs to the eukaryotic initiation factor 4E family. In terms of assembly, EIF4F is a multi-subunit complex, the composition of which varies with external and internal environmental conditions. It is composed of at least EIF4A, EIF4E and EIF4G. EIF4E is also known to interact with other partners. In higher plants two isoforms of EIF4F have been identified, named isoform EIF4F and isoform EIF(iso)4F. Isoform EIF4F has subunits p220 and p26, whereas isoform EIF(iso)4F has subunits p82 and p28. (Microbial infection) Interacts with potyvirus viral genome-linked protein (VPg); this interaction is possible in susceptible hosts but is impaired in resistant plants. Thus the VPg of tobacco etch virus (TEV) strain HAT interacts with susceptible alleles pvr2(+), pvr2(3) and pvr2(9) but not with the resistant allele pvr2(2), the VPg of TEV strain CAA10 interacts with susceptible alleles pvr2(+), pvr2(2), pvr2(3) and pvr2(9), the VPg of potato virus Y (PVY) strain LYE84 interacts with tomato eIF4E1 and eIF4E2 as well as with the Capsicum annuum eIF4E1 susceptible allele pvr2(+) but not with resistant alleles pvr2(1), pvr2(2), pvr2(3), pvr2(4), pvr2(5), pvr2(6), pvr2(7), pvr2(8) and pvr2(9) and the VPg of PVY strain SON41 interacts with C.annuum eIF4E1 susceptible alleles pvr2(+), pvr2(1), pvr2(2), pvr2(3) and pvr2(4) but not with resistant alleles pvr2(5), pvr2(6), pvr2(7), pvr2(8) and pvr2(9). In addition, the susceptible allele pvr1(+) interacts strongly with TEV strains HAT and NW VPg while resistance alleles (pvr1, pvr1(1), and pvr1(2)) fail to bind TEV VPg. According to the redox status, the Cys-126-Cys-164 disulfide bridge may have a role in regulating protein function by affecting its ability to bind capped mRNA.

It localises to the nucleus. The protein localises to the cytoplasm. Functionally, component of the protein complex eIF4F, which is involved in the recognition of the mRNA cap, ATP-dependent unwinding of 5'-terminal secondary structure and recruitment of mRNA to the ribosome. Recognizes and binds the 7-methylguanosine-containing mRNA cap during an early step in the initiation of protein synthesis and facilitates ribosome binding by inducing the unwinding of the mRNAs secondary structures. Key component of recessive resistance to potyviruses. Its function is as follows. (Microbial infection) Susceptibility host factor required for viral infection (e.g. potato virus Y (PVY) and tobacco etch virus (TEV)) by recruiting viral RNAs to the host ribosomal complex via an interaction with viral genome-linked protein (VPg). The protein is Eukaryotic translation initiation factor 4E-1 of Capsicum annuum (Capsicum pepper).